The sequence spans 63 residues: Large ribosomal subunit protein uL29 (63 aa).

It belongs to the universal ribosomal protein uL29 family.

This is Large ribosomal subunit protein uL29 from Bordetella pertussis (strain Tohama I / ATCC BAA-589 / NCTC 13251).